The primary structure comprises 205 residues: Large ribosomal subunit protein bL17c (205 aa).

Residues 1–89 constitute a chloroplast transit peptide; the sequence is MASASTTWSM…VIDNGGRVFA (89 aa).

This sequence belongs to the bacterial ribosomal protein bL17 family. In terms of assembly, part of the 50S ribosomal subunit.

Its subcellular location is the plastid. It localises to the chloroplast. This protein binds directly to 23S ribosomal RNA. The sequence is that of Large ribosomal subunit protein bL17c (RPL17) from Nicotiana tabacum (Common tobacco).